The primary structure comprises 268 residues: Phosphatidylglycerol--prolipoprotein diacylglyceryl transferase (268 aa).

3 helical membrane-spanning segments follow: residues 25-45 (WYGV…TKVF), 57-77 (YLFY…HCFF), and 93-113 (VWHG…AVYF). A 1,2-diacyl-sn-glycero-3-phospho-(1'-sn-glycerol) is bound at residue arginine 142. The next 4 membrane-spanning stretches (helical) occupy residues 151–171 (IIGI…DLLP), 175–195 (VQLY…LAYW), 204–224 (GLLL…LEFF), and 236–256 (PLSV…LLIF).

The protein belongs to the Lgt family.

It localises to the cell inner membrane. It catalyses the reaction L-cysteinyl-[prolipoprotein] + a 1,2-diacyl-sn-glycero-3-phospho-(1'-sn-glycerol) = an S-1,2-diacyl-sn-glyceryl-L-cysteinyl-[prolipoprotein] + sn-glycerol 1-phosphate + H(+). Its pathway is protein modification; lipoprotein biosynthesis (diacylglyceryl transfer). Functionally, catalyzes the transfer of the diacylglyceryl group from phosphatidylglycerol to the sulfhydryl group of the N-terminal cysteine of a prolipoprotein, the first step in the formation of mature lipoproteins. The protein is Phosphatidylglycerol--prolipoprotein diacylglyceryl transferase of Chloroherpeton thalassium (strain ATCC 35110 / GB-78).